Reading from the N-terminus, the 227-residue chain is UPF0173 metal-dependent hydrolase BT9727_4343 (227 aa).

This sequence belongs to the UPF0173 family.

In Bacillus thuringiensis subsp. konkukian (strain 97-27), this protein is UPF0173 metal-dependent hydrolase BT9727_4343.